A 426-amino-acid chain; its full sequence is Interferon regulatory factor 8 (426 aa).

A DNA-binding region (IRF tryptophan pentad repeat) is located at residues 7 to 114; the sequence is GRRLRQWLIE…EPYKVYRIVP (108 aa).

The protein belongs to the IRF family. Interacts (via C-terminus) with TRIM21 (via C-terminus). Interacts with the BATF-JUNB heterodimer. Interacts with BATF (via bZIP domain); the interaction is direct. Interacts with COPS2. Interacts with SPI1. Ubiquitinated. Ubiquitination by TRIM21 in macrophages, a process that is strongly increased upon interferon gamma stimulation, leds to the enhanced transcriptional activity of target cytokine genes. Ubiquitination leads to its degradation by the proteasome. Post-translationally, sumoylated with SUMO3. Desumoylated by SENP1. As to expression, predominantly expressed in lymphoid tissues.

It localises to the nucleus. Its subcellular location is the cytoplasm. Its function is as follows. Transcription factor that specifically binds to the upstream regulatory region of type I interferon (IFN) and IFN-inducible MHC class I genes (the interferon consensus sequence (ICS)). Can both act as a transcriptional activator or repressor. Plays a negative regulatory role in cells of the immune system. Involved in CD8(+) dendritic cell differentiation by forming a complex with the BATF-JUNB heterodimer in immune cells, leading to recognition of AICE sequence (5'-TGAnTCA/GAAA-3'), an immune-specific regulatory element, followed by cooperative binding of BATF and IRF8 and activation of genes. Required for the development of plasmacytoid dendritic cells (pDCs), which produce most of the type I IFN in response to viral infection. Positively regulates macroautophagy in dendritic cells. Acts as a transcriptional repressor of osteoclast differentiation factors such as NFATC1 and EEIG1. The sequence is that of Interferon regulatory factor 8 from Homo sapiens (Human).